The sequence spans 485 residues: MSIRYESVENLLTLIKDKKIKPSDVVKDIYDAIEETDPTIKSFLALDKENAIKKAQELDELQAKDQMDGKLFGIPMGIKDNIITNGLETTCASKMLEGFVPIYESTVMEKLHNENAVLIGKLNMDEFAMGGSTETSYFKKTVNPFDHKAVPGGSSGGSAAAVAAGLVPFSLGSDTGGSIRQPAAYCGVVGMKPTYGRVSRFGLVAFASSLDQIGPLTRNVKDNAIVLEAISGADANDSTSAPVDDVDFTSEIGKDIKGLKVALPKEYLGEGVADDVKEAVQNAVETLKSLGAVVEEVSLPNTKFGIPSYYVIASSEASSNLSRFDGIRYGYHSKEAHSLEELYKMSRSEGFGKEVKRRIFLGTFALSSGYYDAYYKKSQKVRTLIKNDFDKVFENYDVVVGPTAPTTAFNLGEEIDDPLTMYANDLLTTPVNLAGLPGISVPCGQSNGRPIGLQFIGKPFDEKTLYRVAYQYETQYNLHDVYEKL.

Residues lysine 79 and serine 154 each act as charge relay system in the active site. Serine 178 functions as the Acyl-ester intermediate in the catalytic mechanism.

Belongs to the amidase family. GatA subfamily. As to quaternary structure, heterotrimer of A, B and C subunits.

The catalysed reaction is L-glutamyl-tRNA(Gln) + L-glutamine + ATP + H2O = L-glutaminyl-tRNA(Gln) + L-glutamate + ADP + phosphate + H(+). Allows the formation of correctly charged Gln-tRNA(Gln) through the transamidation of misacylated Glu-tRNA(Gln) in organisms which lack glutaminyl-tRNA synthetase. The reaction takes place in the presence of glutamine and ATP through an activated gamma-phospho-Glu-tRNA(Gln). This chain is Glutamyl-tRNA(Gln) amidotransferase subunit A, found in Staphylococcus aureus (strain MRSA252).